The chain runs to 1339 residues: Receptor tyrosine-protein kinase erbB-3 (1339 aa).

A signal peptide spans 1–19 (MRATGTLQVLCFLLSLARG). The Extracellular segment spans residues 20-643 (SEMGNSQAVC…EVLMSKPHLV (624 aa)). N126 carries an N-linked (GlcNAc...) asparagine glycan. Intrachain disulfides connect C186/C194, C190/C202, C210/C218, C214/C226, C227/C235, C231/C243, C246/C255, C259/C286, C290/C301, C305/C320, and C323/C327. The N-linked (GlcNAc...) asparagine glycan is linked to N250. N-linked (GlcNAc...) asparagine glycans are attached at residues N353, N408, N414, N437, and N469. Cystine bridges form between C500/C509, C504/C517, C520/C529, C533/C549, C552/C565, C556/C573, C576/C585, C589/C610, C613/C621, and C617/C629. A glycan (N-linked (GlcNAc...) asparagine) is linked at N522. Residue N566 is glycosylated (N-linked (GlcNAc...) asparagine). N616 is a glycosylation site (N-linked (GlcNAc...) asparagine). Residues 644–662 (IAVTVGLAVILMILGGSFL) form a helical membrane-spanning segment. Over 663–1339 (YWRGRRIQNK…LFPKANAQRT (677 aa)) the chain is Cytoplasmic. S684 is subject to Phosphoserine. Residues 707 to 964 (LRKLKVLGSG…TFKELANEFT (258 aa)) form the Protein kinase domain. Residues 713–721 (LGSGVFGTV), K740, 786–788 (QYL), and 832–837 (DLALRN) each bind ATP. D832 (proton acceptor) is an active-site residue. Phosphoserine is present on S980. Residues 1023 to 1036 (SLGSALSLPTGTLT) show a composition bias toward low complexity. Disordered stretches follow at residues 1023–1052 (SLGS…SGYM) and 1078–1215 (PISL…GSLE). Over residues 1039-1052 (RGSQSLLSPSSGYM) the composition is skewed to polar residues. Residues 1172 to 1184 (GTLSSVGLSSVLG) show a composition bias toward low complexity. Residues 1185 to 1195 (TEEEDEDEEYE) are compositionally biased toward acidic residues.

This sequence belongs to the protein kinase superfamily. Tyr protein kinase family. EGF receptor subfamily. As to quaternary structure, monomer and homodimer. Heterodimer with each of the other ERBB receptors (Potential). Interacts with CSPG5, PA2G4, GRB7, MYOC and MUC1. Found in a ternary complex with NRG1 and ITGAV:ITGB3 or ITGA6:ITGB4. Autophosphorylated. Ligand-binding increases phosphorylation on tyrosine residues and promotes its association with the p85 subunit of phosphatidylinositol 3-kinase.

It is found in the membrane. The enzyme catalyses L-tyrosyl-[protein] + ATP = O-phospho-L-tyrosyl-[protein] + ADP + H(+). In terms of biological role, tyrosine-protein kinase that plays an essential role as cell surface receptor for neuregulins. Binds to neuregulin-1 (NRG1) and is activated by it; ligand-binding increases phosphorylation on tyrosine residues and promotes its association with the p85 subunit of phosphatidylinositol 3-kinase. May also be activated by CSPG5. Involved in the regulation of myeloid cell differentiation. The polypeptide is Receptor tyrosine-protein kinase erbB-3 (Erbb3) (Rattus norvegicus (Rat)).